The following is a 137-amino-acid chain: Probable 4-amino-4-deoxy-L-arabinose-phosphoundecaprenol flippase subunit ArnF (137 aa).

Topologically, residues Met1–Arg5 are cytoplasmic. The chain crosses the membrane as a helical span at residues Gly6 to Trp26. The Periplasmic segment spans residues Gly27 to His44. The helical transmembrane segment at Ala45 to Leu65 threads the bilayer. The Cytoplasmic segment spans residues Ala66–Ala76. The chain crosses the membrane as a helical span at residues Tyr77–Phe97. At Glu98–Thr100 the chain is on the periplasmic side. Residues Phe101–Ala121 form a helical membrane-spanning segment. Topologically, residues Arg122–Leu137 are cytoplasmic.

Belongs to the ArnF family. In terms of assembly, heterodimer of ArnE and ArnF.

It localises to the cell inner membrane. It functions in the pathway bacterial outer membrane biogenesis; lipopolysaccharide biosynthesis. Functionally, translocates 4-amino-4-deoxy-L-arabinose-phosphoundecaprenol (alpha-L-Ara4N-phosphoundecaprenol) from the cytoplasmic to the periplasmic side of the inner membrane. In Pseudomonas paraeruginosa (strain DSM 24068 / PA7) (Pseudomonas aeruginosa (strain PA7)), this protein is Probable 4-amino-4-deoxy-L-arabinose-phosphoundecaprenol flippase subunit ArnF.